A 697-amino-acid chain; its full sequence is Alpha-1,4-glucan:maltose-1-phosphate maltosyltransferase (697 aa).

Position 284 (K284) interacts with alpha-maltose 1-phosphate. The disordered stretch occupies residues 286 to 305; sequence RNNSVTAAPGDVGSPWAIGS. The alpha-maltose 1-phosphate site is built by Q344 and D379. D414 serves as the catalytic Nucleophile. N415 lines the alpha-maltose 1-phosphate pocket. E443 functions as the Proton donor in the catalytic mechanism. Alpha-maltose 1-phosphate is bound at residue 553–554; the sequence is KY.

The protein belongs to the glycosyl hydrolase 13 family. GlgE subfamily. In terms of assembly, homodimer.

The catalysed reaction is alpha-maltose 1-phosphate + [(1-&gt;4)-alpha-D-glucosyl](n) = [(1-&gt;4)-alpha-D-glucosyl](n+2) + phosphate. It functions in the pathway glycan biosynthesis; glycogen biosynthesis. Its activity is regulated as follows. The transfer reaction from maltose-1-P to glycogen is inhibited by micromolar amounts of inorganic phosphate or arsenate but is only slightly inhibited by millimolar concentrations of glucose-1-P, glucose-6-P, or inorganic pyrophosphate. Is also inhibited by ATP, by 1,4-dideoxy-1,4-imino-D-arabinitol (DIA), but not by isofagomine. Functionally, maltosyltransferase that uses maltose 1-phosphate (M1P) as the sugar donor to elongate linear or branched alpha-(1-&gt;4)-glucans. Is also able to catalyze the reverse reaction in vitro. Cannot use glucose 1-phosphate as substrate. Is involved in a branched alpha-glucan biosynthetic pathway from trehalose, together with TreS, Mak and GlgB. The chain is Alpha-1,4-glucan:maltose-1-phosphate maltosyltransferase (glgE) from Mycolicibacterium smegmatis (strain ATCC 700084 / mc(2)155) (Mycobacterium smegmatis).